A 149-amino-acid polypeptide reads, in one-letter code: Large ribosomal subunit protein bL9 (149 aa).

It belongs to the bacterial ribosomal protein bL9 family.

Binds to the 23S rRNA. The polypeptide is Large ribosomal subunit protein bL9 (Dichelobacter nodosus (strain VCS1703A)).